The following is a 104-amino-acid chain: Sweet protein mabinlin-1 (104 aa).

Cystine bridges form between cysteine 4–cysteine 53, cysteine 17–cysteine 42, cysteine 43–cysteine 91, and cysteine 55–cysteine 99.

Belongs to the 2S seed storage albumins family. In terms of assembly, heterodimer of a small A and a large B chain linked by disulfide bonds.

Functionally, 2S seed storage protein having sweetness-inducing activity. This form is not heat stable. This is Sweet protein mabinlin-1 from Capparis masaikai (Mabinlang).